A 371-amino-acid polypeptide reads, in one-letter code: Glutamate 5-kinase (371 aa).

An ATP-binding site is contributed by Lys-11. Substrate contacts are provided by Ser-52, Asp-139, and Asn-151. ATP is bound by residues 171–172 and 213–219; these read TD and TGGMATK. The 79-residue stretch at 278-356 folds into the PUA domain; the sequence is EGSLTLDEGA…AEIPYILGYE (79 aa).

The protein belongs to the glutamate 5-kinase family.

The protein localises to the cytoplasm. The catalysed reaction is L-glutamate + ATP = L-glutamyl 5-phosphate + ADP. The protein operates within amino-acid biosynthesis; L-proline biosynthesis; L-glutamate 5-semialdehyde from L-glutamate: step 1/2. Functionally, catalyzes the transfer of a phosphate group to glutamate to form L-glutamate 5-phosphate. The chain is Glutamate 5-kinase from Synechococcus sp. (strain JA-3-3Ab) (Cyanobacteria bacterium Yellowstone A-Prime).